The chain runs to 426 residues: Dynein regulatory complex protein 10 (426 aa).

Disordered stretches follow at residues 18–37 and 399–426; these read TRIG…LKPL and SKKK…KGKK. An IQ domain is found at 377 to 406; that stretch reads MVRAATLIQAFWKGYLVRSLLRSKKKRGKG. Positions 399–408 are enriched in basic residues; the sequence is SKKKRGKGKA. The segment covering 409–426 has biased composition (basic and acidic residues); sequence KGKEKGKQKGKEKGKGKK.

Belongs to the DRC10 family. As to quaternary structure, component of the nexin-dynein regulatory complex (N-DRC). Interacts with CFAP52.

Its subcellular location is the cytoplasm. It localises to the cytoskeleton. It is found in the flagellum axoneme. In terms of biological role, component of the nexin-dynein regulatory complex (N-DRC), a key regulator of ciliary/flagellar motility which maintains the alignment and integrity of the distal axoneme and regulates microtubule sliding in motile axonemes. This is Dynein regulatory complex protein 10 (IQCD) from Macaca fascicularis (Crab-eating macaque).